Consider the following 551-residue polypeptide: Protein ROOT HAIR SPECIFIC 17 (551 aa).

A helical; Signal-anchor for type II membrane protein transmembrane segment spans residues 39 to 59 (LFPLVSAVSGCLLLILFSFST). N-linked (GlcNAc...) asparagine glycans are attached at residues asparagine 109 and asparagine 153. 293-295 (HLR) serves as a coordination point for substrate. N-linked (GlcNAc...) asparagine glycosylation is found at asparagine 405 and asparagine 465. Residues 515–539 (KAKHVNEDDSSEYSEIGNVPISSRS) are disordered.

The protein belongs to the glycosyltransferase GT106 family. As to expression, specifically expressed in the root hair.

The protein resides in the membrane. It functions in the pathway glycan metabolism. This Arabidopsis thaliana (Mouse-ear cress) protein is Protein ROOT HAIR SPECIFIC 17.